The sequence spans 222 residues: Ras-related protein RabT1 (222 aa).

37-44 (GDNKTGKS) serves as a coordination point for GTP. The short motif at 59–66 (VSSIGVDF) is the Effector region element. Residues 85–89 (DVNSC) and 145–148 (NKCD) each bind GTP. Cysteine 219 carries the post-translational modification Cysteine methyl ester. Cysteine 219 is lipidated: S-geranylgeranyl cysteine. Positions 220–222 (NIL) are cleaved as a propeptide — removed in mature form.

This sequence belongs to the small GTPase superfamily. Rab family.

It is found in the cell membrane. The protein is Ras-related protein RabT1 (rabT1) of Dictyostelium discoideum (Social amoeba).